The primary structure comprises 286 residues: Lipoyl synthase (286 aa).

Residues cysteine 29, cysteine 34, cysteine 40, cysteine 55, cysteine 59, cysteine 62, and serine 265 each coordinate [4Fe-4S] cluster. Residues 41–254 enclose the Radical SAM core domain; that stretch reads WGSGTATFMI…EKIAYSLGFS (214 aa).

The protein belongs to the radical SAM superfamily. Lipoyl synthase family. [4Fe-4S] cluster serves as cofactor.

Its subcellular location is the cytoplasm. It carries out the reaction [[Fe-S] cluster scaffold protein carrying a second [4Fe-4S](2+) cluster] + N(6)-octanoyl-L-lysyl-[protein] + 2 oxidized [2Fe-2S]-[ferredoxin] + 2 S-adenosyl-L-methionine + 4 H(+) = [[Fe-S] cluster scaffold protein] + N(6)-[(R)-dihydrolipoyl]-L-lysyl-[protein] + 4 Fe(3+) + 2 hydrogen sulfide + 2 5'-deoxyadenosine + 2 L-methionine + 2 reduced [2Fe-2S]-[ferredoxin]. It participates in protein modification; protein lipoylation via endogenous pathway; protein N(6)-(lipoyl)lysine from octanoyl-[acyl-carrier-protein]: step 2/2. In terms of biological role, catalyzes the radical-mediated insertion of two sulfur atoms into the C-6 and C-8 positions of the octanoyl moiety bound to the lipoyl domains of lipoate-dependent enzymes, thereby converting the octanoylated domains into lipoylated derivatives. This is Lipoyl synthase from Sulfolobus acidocaldarius (strain ATCC 33909 / DSM 639 / JCM 8929 / NBRC 15157 / NCIMB 11770).